A 108-amino-acid chain; its full sequence is uncharacterized protein (108 aa).

This is an uncharacterized protein from Acanthamoeba polyphaga mimivirus (APMV).